The primary structure comprises 318 residues: Lytic amidase (318 aa).

The 133-residue stretch at 19 to 151 folds into the N-acetylmuramoyl-L-alanine amidase domain; the sequence is PYRQVHAHST…NNHSDHVDPY (133 aa). Cell wall-binding repeat units follow at residues 175 to 194, 196 to 215, 217 to 237, 238 to 257, 258 to 277, and 280 to 301; these read ATGWQKNGTGYWYVHSDGSY, KDKFEKINGTWYYFDGSGYM, SDRWKKHTDGNWYYFDQSGEM, ATGWKKIADKWYYFDVEGAM, KTGWVKYKDTWYYLDAKEGA, and SNAFIQSADGTGWYYLKPDGTL.

It belongs to the N-acetylmuramoyl-L-alanine amidase 2 family.

The protein localises to the secreted. It carries out the reaction Hydrolyzes the link between N-acetylmuramoyl residues and L-amino acid residues in certain cell-wall glycopeptides.. The polypeptide is Lytic amidase (HBL) (Streptococcus pneumoniae phage HB-3).